The sequence spans 146 residues: Hydroxyproline-rich systemin (146 aa).

Positions 1–24 (MISFFRAFFLIIIISFLIFVGAQA) are cleaved as a signal peptide. Positions 25–48 (RTLLGNYHDDEMLIELKLESGNYG) are excised as a propeptide. Residues 47 to 128 (YGRTPYKTPP…PPPPKPQDEQ (82 aa)) are disordered. 4-hydroxyproline occurs at positions 51, 55, 56, 57, 58, and 63. O-linked (Ara...) hydroxyproline glycans are attached at residues Pro-51, Pro-55, Pro-56, Pro-57, Pro-58, and Pro-63. The propeptide occupies 67-70 (EIVN). 4-hydroxyproline is present on residues Pro-79, Pro-80, and Pro-82. O-linked (Ara...) hydroxyproline glycosylation is found at Pro-79, Pro-80, and Pro-82. The propeptide occupies 86-110 (PIIGQLTTITTTPHHDDTVAAPPVG). Residues Pro-119, Pro-120, Pro-121, and Pro-122 each carry the 4-hydroxyproline modification. Pro-119, Pro-120, Pro-121, and Pro-122 each carry an O-linked (Ara...) hydroxyproline glycan. Residues 131 to 146 (IIITSSSSTLPLQASY) constitute a propeptide that is removed on maturation.

In terms of processing, O-glycosylated; contains pentose side chains. As to expression, leaves.

The protein localises to the secreted. Its function is as follows. Activates a lipid-based signal transduction pathway in which linolenic acid is converted to jasmonic acid, a potent activator of defense gene transcription. Induces synthesis of proteinase inhibitors I and II in leaves when supplied through cut stems. The sequence is that of Hydroxyproline-rich systemin from Solanum lycopersicum (Tomato).